Reading from the N-terminus, the 357-residue chain is COP9 signalosome complex subunit 5a (357 aa).

Residue Met-1 is modified to N-acetylmethionine. Positions 59–196 constitute an MPN domain; the sequence is VHISALALLK…IGAFRTYPEG (138 aa). Residues His-142, His-144, and Asp-155 each coordinate Zn(2+). The JAMM motif signature appears at 142–155; it reads HSHPGYGCWLSGID. The disordered stretch occupies residues 338-357; that stretch reads ARQSKKSADDSSDPEPMITS.

This sequence belongs to the peptidase M67A family. CSN5 subfamily. Component of the CSN complex, probably composed of CSN1, CSN2, CSN3, CSN4, CSN5 (CSN5A or CSN5B), CSN6 (CSN6A or CSN6B), CSN7 and CSN8. CSN5A or CSN5B are present within distinct CSN complexes each containing only one copy of CSN5. Interacts with itself. In the complex, it is located in the center and probably interacts directly with CSN4 and CSN6A or CSN6B. Present also in subcomplex forms which inculdes CSN3. Also exists as monomeric form. Interacts with CYT1 in vitro, but not in planta. It depends on a divalent metal cation as a cofactor. Ubiquitously expressed. Highly expressed in flowers and roots. Expressed at lower level in seedlings and siliques.

It is found in the cytoplasm. Its subcellular location is the nucleus. Probable protease subunit of the COP9 signalosome complex (CSN), a complex involved in various cellular and developmental processes such as photomorphogenesis and auxin and jasmonate responses. The CSN complex is an essential regulator of the ubiquitin (Ubl) conjugation pathway by mediating the deneddylation of the cullin subunits of the SCF-type E3 ligase complexes, leading to decrease the Ubl ligase activity of SCF. In the complex, it probably acts as the catalytic center that mediates the cleavage of Nedd8 from cullins. It however has no metalloprotease activity by itself and requires the other subunits of the CSN complex. The CSN complex is involved in repression of photomorphogenesis in darkness by regulating the activity of COP1-containing Ubl ligase complexes. The complex is also required for degradation of PSIAA6 by regulating the activity of the Ubl ligase SCF-TIR complex. Involved in CSN's deneddylation/derubylation activity. Required for the deneddylation of all cullins. Essential for the structural integrity of the CSN holocomplex. The sequence is that of COP9 signalosome complex subunit 5a from Arabidopsis thaliana (Mouse-ear cress).